We begin with the raw amino-acid sequence, 277 residues long: Protein RKD3 (277 aa).

The region spanning 142–226 is the RWP-RK domain; that stretch reads KRIIMKRRYR…LGNTKGRTPK (85 aa). Residues 201-246 are a coiled coil; it reads RKLTSLNALIANLKDLLGNTKGRTPKSKLRNALELLEMEKKMIEEV.

Its subcellular location is the nucleus. Putative transcription factor. The chain is Protein RKD3 (RKD3) from Arabidopsis thaliana (Mouse-ear cress).